Reading from the N-terminus, the 219-residue chain is DAN domain family member 5 (219 aa).

Positions 1–19 are cleaved as a signal peptide; it reads MLLFRAASLLPLLCFTVGA. 4 cysteine pairs are disulfide-bonded: C118-C165, C132-C179, C142-C195, and C146-C197. One can recognise a CTCK domain in the interval 118–198; it reads CHALPFIQNV…VELVEECECE (81 aa).

It belongs to the DAN family. Interacts with nr1-a.

The protein localises to the secreted. Functionally, plays an important role in regulating the left-right axis by blocking a tgfb1 cascade in the right posterior paraxial mesoderm. Functions as an inhibitor of bmp, tgfb1, nodal, activin and wnt signaling in the ectoderm. May inhibit mesodermal signals, probably through an inhibition of nodal/activin pathways. Seems to regulates cell fate specification and competence before the onset of neural induction. Expression in the entire ectodermal region prior to gastrulation might act to prevent fate specification in the ectoderm and ensure the maintenance of the stem-cell-like properties exhibited by ectodermal cells. In Xenopus tropicalis (Western clawed frog), this protein is DAN domain family member 5 (dand5).